Here is a 186-residue protein sequence, read N- to C-terminus: Protein Syd (186 aa).

It belongs to the Syd family.

Its subcellular location is the cell inner membrane. Functionally, interacts with the SecY protein in vivo. May bind preferentially to an uncomplexed state of SecY, thus functioning either as a chelating agent for excess SecY in the cell or as a regulatory factor that negatively controls the translocase function. The protein is Protein Syd of Pseudoalteromonas atlantica (strain T6c / ATCC BAA-1087).